A 45-amino-acid polypeptide reads, in one-letter code: Thymosin beta-15A homolog (45 aa).

The tract at residues 19–45 (KKTNTEEKNTLPSKETIEQEKECVKSS) is disordered. The segment covering 21–45 (TNTEEKNTLPSKETIEQEKECVKSS) has biased composition (basic and acidic residues).

This sequence belongs to the thymosin beta family.

Its subcellular location is the cytoplasm. The protein localises to the cytoskeleton. Its function is as follows. Plays an important role in the organization of the cytoskeleton. Binds to and sequesters actin monomers (G actin) and therefore inhibits actin polymerization. This is Thymosin beta-15A homolog from Coturnix japonica (Japanese quail).